A 449-amino-acid polypeptide reads, in one-letter code: UNC93-like protein MFSD11 (449 aa).

Residues 8 to 28 (LFNIVILGVAFMFMFTAFQTC) traverse the membrane as a helical segment. N-linked (GlcNAc...) asparagine glycosylation occurs at N40. Helical transmembrane passes span 53–73 (AIIY…VAIV), 74–94 (GPQI…AVFI), 96–116 (PFPW…AVLW), 138–158 (IFWA…YFAW), and 170–190 (RTVF…FFLI). S204 bears the Phosphoserine mark. 6 helical membrane passes run 239–259 (MLLL…FSGV), 277–297 (LIGL…SLFG), 309–329 (PVVL…FLNM), 359–379 (FLLG…LGFL), 385–405 (APAF…AFFY), and 410–430 (LLHW…ISFF).

This sequence belongs to the unc-93 family. As to expression, widely expressed.

The protein localises to the membrane. In Mus musculus (Mouse), this protein is UNC93-like protein MFSD11 (Mfsd11).